The chain runs to 196 residues: Macrophage infectivity potentiator (196 aa).

Residues 1-29 (MHRENYFSKIAFCLLGVLFLSCITSVQTV) form the signal peptide. Residues 85-171 (DDKCEVHYTG…EFDVELISIK (87 aa)) enclose the PPIase FKBP-type domain.

Belongs to the FKBP-type PPIase family.

Its subcellular location is the secreted. It is found in the extracellular space. The catalysed reaction is [protein]-peptidylproline (omega=180) = [protein]-peptidylproline (omega=0). With respect to regulation, strongly inhibited by FK506 and L-685,818. In terms of biological role, essential virulence factor associated with macrophage infectivity. Exhibits PPIase activity. This is Macrophage infectivity potentiator (MIP) from Trypanosoma cruzi.